A 160-amino-acid chain; its full sequence is Small ribosomal subunit protein uS19v (160 aa).

This sequence belongs to the universal ribosomal protein uS19 family.

It is found in the cytoplasm. This is Small ribosomal subunit protein uS19v (RPS15F) from Arabidopsis thaliana (Mouse-ear cress).